A 435-amino-acid chain; its full sequence is Islet cell autoantigen 1-like protein (435 aa).

Residues 44-247 enclose the AH domain; sequence ASDAELDAKL…TAQMMSQIQE (204 aa). The disordered stretch occupies residues 391-435; it reads WASQEGSEHSDTLPVPSQHPKKLKYLGPLSNPDAIGHSDDELLNA. A compositionally biased stretch (basic and acidic residues) spans 426–435; sequence GHSDDELLNA.

This chain is Islet cell autoantigen 1-like protein (Ica1l), found in Rattus norvegicus (Rat).